An 804-amino-acid chain; its full sequence is Probable basic-leucine zipper transcription factor C (804 aa).

Disordered stretches follow at residues 86-148 and 275-371; these read FISP…NDIN and YGNV…PKKR. The span at 90-145 shows a compositional bias: low complexity; it reads NNNNNNNNNNNNNNNNNNNNNNNNNNNNNNNNNNNNNNNNNNNNNNNNNNNNNNNN. Polar residues predominate over residues 275 to 291; the sequence is YGNVSDNSSPETNFSYA. A compositionally biased stretch (low complexity) spans 292-334; the sequence is SPSSPSSTQSQSSPYEQQPLSPNPTISLSSSISVTATTTTRPN. The segment covering 335–356 has biased composition (basic and acidic residues); that stretch reads ATEKTKESSLKSKSKSNEKDKE. Residues 415-478 form the bZIP domain; the sequence is ALNYQFRKIK…DQYKLQEKQK (64 aa). Residues 421–436 form a basic motif region; that stretch reads RKIKNRESARRSRERK. The leucine-zipper stretch occupies residues 443 to 450; it reads LEAKIAEI. The tract at residues 670-693 is disordered; it reads KNCNNNNENNNNNDNNKNSDDEKG. The span at 672–685 shows a compositional bias: low complexity; sequence CNNNNENNNNNDNN.

Belongs to the bZIP family.

It is found in the nucleus. Functionally, probable transcriptional regulator. The sequence is that of Probable basic-leucine zipper transcription factor C (bzpC) from Dictyostelium discoideum (Social amoeba).